We begin with the raw amino-acid sequence, 186 residues long: Acireductone dioxygenase (186 aa).

The Fe(2+) site is built by His-103, His-105, Glu-109, and His-147. Ni(2+) is bound by residues His-103, His-105, Glu-109, and His-147.

This sequence belongs to the acireductone dioxygenase (ARD) family. As to quaternary structure, monomer. Requires Fe(2+) as cofactor. It depends on Ni(2+) as a cofactor.

It carries out the reaction 1,2-dihydroxy-5-(methylsulfanyl)pent-1-en-3-one + O2 = 3-(methylsulfanyl)propanoate + CO + formate + 2 H(+). The enzyme catalyses 1,2-dihydroxy-5-(methylsulfanyl)pent-1-en-3-one + O2 = 4-methylsulfanyl-2-oxobutanoate + formate + 2 H(+). The protein operates within amino-acid biosynthesis; L-methionine biosynthesis via salvage pathway; L-methionine from S-methyl-5-thio-alpha-D-ribose 1-phosphate: step 5/6. Its function is as follows. Catalyzes 2 different reactions between oxygen and the acireductone 1,2-dihydroxy-3-keto-5-methylthiopentene (DHK-MTPene) depending upon the metal bound in the active site. Fe-containing acireductone dioxygenase (Fe-ARD) produces formate and 2-keto-4-methylthiobutyrate (KMTB), the alpha-ketoacid precursor of methionine in the methionine recycle pathway. Ni-containing acireductone dioxygenase (Ni-ARD) produces methylthiopropionate, carbon monoxide and formate, and does not lie on the methionine recycle pathway. In Synechococcus sp. (strain CC9605), this protein is Acireductone dioxygenase.